Reading from the N-terminus, the 119-residue chain is Large ribosomal subunit protein uL24 (119 aa).

It belongs to the universal ribosomal protein uL24 family. In terms of assembly, part of the 50S ribosomal subunit.

Functionally, one of two assembly initiator proteins, it binds directly to the 5'-end of the 23S rRNA, where it nucleates assembly of the 50S subunit. Located at the polypeptide exit tunnel on the outside of the subunit. The protein is Large ribosomal subunit protein uL24 of Methanococcus vannielii.